Consider the following 160-residue polypeptide: Fimbrial protein (160 aa).

A propeptide spans 1 to 7 (leader sequence); the sequence is MKSLQKG. Residue Phe-8 is modified to N-methylphenylalanine. A helical membrane pass occupies residues 8–28; sequence FTLIELMIVVAIIGILAAFAI.

The protein belongs to the N-Me-Phe pilin family. In terms of assembly, the pili are polar flexible filaments of about 5.4 nanometers diameter and 2.5 micrometers average length; they consist of only a single polypeptide chain arranged in a helical configuration of five subunits per turn in the assembled pilus.

The protein resides in the fimbrium. It is found in the membrane. The polypeptide is Fimbrial protein (fimA) (Dichelobacter nodosus (Bacteroides nodosus)).